The following is a 223-amino-acid chain: MKRTKSIRHASFRKNWSARHLTPVALAVATVFMLAGCEKSDETVSLYQNADDCSAANPGKSAECTTAYNNALKEAERTAPKYATREDCVAEFGEGQCQQAPAQAGMAPENQAQAQQSSGSFWMPLMAGYMMGRLMGGGAGFAQQPLFSSKNPASPAYGKYTDATGKNYGAAQPGRTMTVPKTAMAPKPATTTTVTRGGFGESVAKQSTLQRSATGTSSRSMGG.

Low complexity predominate over residues 178–195 (TVPKTAMAPKPATTTTVT). Positions 178-223 (TVPKTAMAPKPATTTTVTRGGFGESVAKQSTLQRSATGTSSRSMGG) are disordered. Polar residues predominate over residues 204 to 223 (AKQSTLQRSATGTSSRSMGG).

This sequence belongs to the UPF0441 family.

This Escherichia coli (strain ATCC 8739 / DSM 1576 / NBRC 3972 / NCIMB 8545 / WDCM 00012 / Crooks) protein is UPF0441 protein YgiB.